Consider the following 70-residue polypeptide: uncharacterized protein (70 aa).

Residues 50–70 (INVVLVLIIALIIFILMLDGV) traverse the membrane as a helical segment.

Its subcellular location is the membrane. This is an uncharacterized protein from Dictyostelium discoideum (Social amoeba).